The primary structure comprises 655 residues: MEQPSILVKILHSIPHVNYTFRRVNDTFNPDSDVYLEPTNNKLQCQQKGIELQSLVILASIPAGLLIGSLLGLLLYLLTRCCDRRQRKPSAQRCQSCSLVIITLMTCAAIGLGLYGNDDFHNGLLQAFGSGKSVEGLVLTLKRQTESIKHDLETRMAGHKVEQLVEKPHYNQTVVMLLIETSRLVTENTSRAVASLDSMVHYFMKAKGSENDTSLMGLLQLGEFYESIRWPATLAFLTVLLLLCTVLVIGVARRSRCTLIFFSVSGLFCIIICWLLAGVYLASSVAAGDFCMRPHDYMCRQVGMRSPYVDFLNCGTPRNRFILRLNESRDLVDRARESVEHMQRMSQETYPHIDIQRTLNAMDNDLEITLRNLTTLSATLDRRTIDMHYEEALRGLCGGGLLGLSLMMVAGLLTSFLLTILVYADSHAWIYLTKRPTLDADKSETAPLFPASNAPSASISPTAPLSTGTINRTLLHHQQASSGGGSGTLPGSGGGAGAGGGVGANGHNGVGPYRNGSAGLRQGLASPSSQSSHTSSTATYNNGTTSYHNSHQQHNNHLYSNHYSHSNNHYNNTQHRTNPAAGAVAAAVGVVSSGQRSPSPPPVYDLVHGTRSGHHTLGRLPSHHQQSATYLPGPNNGKYATLSKQCKTLESNDFY.

The Extracellular segment spans residues 1-54 (MEQPSILVKILHSIPHVNYTFRRVNDTFNPDSDVYLEPTNNKLQCQQKGIELQS). N-linked (GlcNAc...) asparagine glycosylation is found at Asn18 and Asn25. The helical transmembrane segment at 55 to 75 (LVILASIPAGLLIGSLLGLLL) threads the bilayer. Topologically, residues 76–95 (YLLTRCCDRRQRKPSAQRCQ) are cytoplasmic. Residues 96–116 (SCSLVIITLMTCAAIGLGLYG) form a helical membrane-spanning segment. Residues 117–231 (NDDFHNGLLQ…GEFYESIRWP (115 aa)) are Extracellular-facing. Residues Asn171, Asn188, and Asn211 are each glycosylated (N-linked (GlcNAc...) asparagine). Residues 232 to 252 (ATLAFLTVLLLLCTVLVIGVA) traverse the membrane as a helical segment. Topologically, residues 253-258 (RRSRCT) are cytoplasmic. The chain crosses the membrane as a helical span at residues 259-279 (LIFFSVSGLFCIIICWLLAGV). Residues 280-401 (YLASSVAAGD…ALRGLCGGGL (122 aa)) are Extracellular-facing. Residues Asn326 and Asn372 are each glycosylated (N-linked (GlcNAc...) asparagine). The chain crosses the membrane as a helical span at residues 402-422 (LGLSLMMVAGLLTSFLLTILV). The Cytoplasmic portion of the chain corresponds to 423–655 (YADSHAWIYL…CKTLESNDFY (233 aa)). Residues 446–576 (APLFPASNAP…NNHYNNTQHR (131 aa)) form a disordered region. The span at 450 to 464 (PASNAPSASISPTAP) shows a compositional bias: low complexity. The segment covering 465–480 (LSTGTINRTLLHHQQA) has biased composition (polar residues). Residues 482–509 (SGGGSGTLPGSGGGAGAGGGVGANGHNG) are compositionally biased toward gly residues. 2 stretches are compositionally biased toward low complexity: residues 526–539 (SPSSQSSHTSSTAT) and 546–576 (SYHNSHQQHNNHLYSNHYSHSNNHYNNTQHR). Phosphoserine occurs at positions 597 and 599.

The protein belongs to the tweety family.

It localises to the cell membrane. It carries out the reaction chloride(in) = chloride(out). Probable large-conductance Ca(2+)-activated chloride channel. Modulator of embryonic movement. The polypeptide is Protein movement modulator (Drosophila melanogaster (Fruit fly)).